The primary structure comprises 611 residues: Elongation factor 4 1 (611 aa).

A tr-type G domain is found at 11 to 193; sequence QHIRNFSIVA…QIVHKIPAPQ (183 aa). Residues 23–28 and 140–143 contribute to the GTP site; these read DHGKST and NKID.

This sequence belongs to the TRAFAC class translation factor GTPase superfamily. Classic translation factor GTPase family. LepA subfamily.

The protein resides in the cell membrane. It catalyses the reaction GTP + H2O = GDP + phosphate + H(+). In terms of biological role, required for accurate and efficient protein synthesis under certain stress conditions. May act as a fidelity factor of the translation reaction, by catalyzing a one-codon backward translocation of tRNAs on improperly translocated ribosomes. Back-translocation proceeds from a post-translocation (POST) complex to a pre-translocation (PRE) complex, thus giving elongation factor G a second chance to translocate the tRNAs correctly. Binds to ribosomes in a GTP-dependent manner. The sequence is that of Elongation factor 4 1 from Lactiplantibacillus plantarum (strain ATCC BAA-793 / NCIMB 8826 / WCFS1) (Lactobacillus plantarum).